A 91-amino-acid chain; its full sequence is Small ribosomal subunit protein bS16 (91 aa).

It belongs to the bacterial ribosomal protein bS16 family.

This is Small ribosomal subunit protein bS16 from Staphylococcus epidermidis (strain ATCC 35984 / DSM 28319 / BCRC 17069 / CCUG 31568 / BM 3577 / RP62A).